The primary structure comprises 543 residues: Cyclohexanone 1,2-monooxygenase (543 aa).

Residues Phe16, Asp37, Trp46, Asp57, Tyr63, and Val110 each contribute to the FAD site.

This sequence belongs to the FAD-binding monooxygenase family. It depends on FAD as a cofactor.

It carries out the reaction cyclohexanone + NADPH + O2 + H(+) = hexano-6-lactone + NADP(+) + H2O. The chain is Cyclohexanone 1,2-monooxygenase from Acinetobacter sp.